The following is a 153-amino-acid chain: Large ribosomal subunit protein uL22 (153 aa).

The protein belongs to the universal ribosomal protein uL22 family. Part of the 50S ribosomal subunit.

In terms of biological role, this protein binds specifically to 23S rRNA. It makes multiple contacts with different domains of the 23S rRNA in the assembled 50S subunit and ribosome. Functionally, the globular domain of the protein is located near the polypeptide exit tunnel on the outside of the subunit, while an extended beta-hairpin is found that lines the wall of the exit tunnel in the center of the 70S ribosome. The chain is Large ribosomal subunit protein uL22 from Methanoculleus marisnigri (strain ATCC 35101 / DSM 1498 / JR1).